Reading from the N-terminus, the 84-residue chain is ATP synthase subunit c (84 aa).

2 consecutive transmembrane segments (helical) span residues 13–33 (IAVG…WGLI) and 56–76 (FIFA…GFWF).

This sequence belongs to the ATPase C chain family. As to quaternary structure, F-type ATPases have 2 components, F(1) - the catalytic core - and F(0) - the membrane proton channel. F(1) has five subunits: alpha(3), beta(3), gamma(1), delta(1), epsilon(1). F(0) has three main subunits: a(1), b(2) and c(10-14). The alpha and beta chains form an alternating ring which encloses part of the gamma chain. F(1) is attached to F(0) by a central stalk formed by the gamma and epsilon chains, while a peripheral stalk is formed by the delta and b chains.

Its subcellular location is the cell inner membrane. Functionally, f(1)F(0) ATP synthase produces ATP from ADP in the presence of a proton or sodium gradient. F-type ATPases consist of two structural domains, F(1) containing the extramembraneous catalytic core and F(0) containing the membrane proton channel, linked together by a central stalk and a peripheral stalk. During catalysis, ATP synthesis in the catalytic domain of F(1) is coupled via a rotary mechanism of the central stalk subunits to proton translocation. Its function is as follows. Key component of the F(0) channel; it plays a direct role in translocation across the membrane. A homomeric c-ring of between 10-14 subunits forms the central stalk rotor element with the F(1) delta and epsilon subunits. This Acidithiobacillus ferrooxidans (strain ATCC 23270 / DSM 14882 / CIP 104768 / NCIMB 8455) (Ferrobacillus ferrooxidans (strain ATCC 23270)) protein is ATP synthase subunit c.